Reading from the N-terminus, the 616-residue chain is Chaperone protein HscA (616 aa).

This sequence belongs to the heat shock protein 70 family.

In terms of biological role, chaperone involved in the maturation of iron-sulfur cluster-containing proteins. Has a low intrinsic ATPase activity which is markedly stimulated by HscB. Involved in the maturation of IscU. The sequence is that of Chaperone protein HscA from Salmonella enteritidis PT4 (strain P125109).